Consider the following 165-residue polypeptide: ATP synthase subunit b (165 aa).

A helical membrane pass occupies residues 11 to 31 (LIFWTIVNFLLLVFLLGKFAW).

This sequence belongs to the ATPase B chain family. As to quaternary structure, F-type ATPases have 2 components, F(1) - the catalytic core - and F(0) - the membrane proton channel. F(1) has five subunits: alpha(3), beta(3), gamma(1), delta(1), epsilon(1). F(0) has three main subunits: a(1), b(2) and c(10-14). The alpha and beta chains form an alternating ring which encloses part of the gamma chain. F(1) is attached to F(0) by a central stalk formed by the gamma and epsilon chains, while a peripheral stalk is formed by the delta and b chains.

It localises to the cell membrane. Functionally, f(1)F(0) ATP synthase produces ATP from ADP in the presence of a proton or sodium gradient. F-type ATPases consist of two structural domains, F(1) containing the extramembraneous catalytic core and F(0) containing the membrane proton channel, linked together by a central stalk and a peripheral stalk. During catalysis, ATP synthesis in the catalytic domain of F(1) is coupled via a rotary mechanism of the central stalk subunits to proton translocation. In terms of biological role, component of the F(0) channel, it forms part of the peripheral stalk, linking F(1) to F(0). This is ATP synthase subunit b from Elusimicrobium minutum (strain Pei191).